The following is a 233-amino-acid chain: Tumor necrosis factor (233 aa).

The Cytoplasmic portion of the chain corresponds to 1–35; sequence MSTESMIRDVELAEEALPKKTGGPQGSRRCLFLSL. Ser-2 is subject to Phosphoserine; by CK1. 2 N6-myristoyl lysine lipidation sites follow: Lys-19 and Lys-20. The helical; Signal-anchor for type II membrane protein transmembrane segment at 36–56 threads the bilayer; the sequence is FSFLLVAGATTLFCLLHFGVI. Residues 57 to 233 are Extracellular-facing; it reads GPQREEFPKD…GQVYFGIIAL (177 aa). Ser-80 carries an O-linked (GalNAc...) serine; in soluble form glycan. Residues 88–233 enclose the THD domain; it reads PVAHVVANPQ…GQVYFGIIAL (146 aa). The cysteines at positions 145 and 177 are disulfide-linked.

It belongs to the tumor necrosis factor family. In terms of assembly, homotrimer. Interacts with SPPL2B. In terms of processing, the soluble form derives from the membrane form by proteolytic processing. The membrane-bound form is further proteolytically processed by SPPL2A or SPPL2B through regulated intramembrane proteolysis producing TNF intracellular domains (ICD1 and ICD2) released in the cytosol and TNF C-domain 1 and C-domain 2 secreted into the extracellular space. The membrane form, but not the soluble form, is phosphorylated on serine residues. Dephosphorylation of the membrane form occurs by binding to soluble TNFRSF1A/TNFR1. Post-translationally, O-glycosylated; glycans contain galactose, N-acetylgalactosamine and N-acetylneuraminic acid. In terms of processing, the soluble form is demyristoylated by SIRT6, promoting its secretion.

The protein resides in the cell membrane. It is found in the membrane. Its subcellular location is the secreted. Cytokine that binds to TNFRSF1A/TNFR1 and TNFRSF1B/TNFBR. It is mainly secreted by macrophages and can induce cell death of certain tumor cell lines. It is potent pyrogen causing fever by direct action or by stimulation of interleukin-1 secretion and is implicated in the induction of cachexia, Under certain conditions it can stimulate cell proliferation and induce cell differentiation. Induces insulin resistance in adipocytes via inhibition of insulin-induced IRS1 tyrosine phosphorylation and insulin-induced glucose uptake. Induces GKAP42 protein degradation in adipocytes which is partially responsible for TNF-induced insulin resistance. Plays a role in angiogenesis by inducing VEGF production synergistically with IL1B and IL6. Promotes osteoclastogenesis and therefore mediates bone resorption. Functionally, the TNF intracellular domain (ICD) form induces IL12 production in dendritic cells. This chain is Tumor necrosis factor (TNF), found in Papio sp. (Baboon).